A 319-amino-acid chain; its full sequence is UPF0761 membrane protein PBPRA3489 (319 aa).

6 consecutive transmembrane segments (helical) span residues 50–70 (LVPM…FAGL), 107–127 (VGIG…DHAL), 143–163 (FSIY…SIAV), 188–208 (ALPV…VPNL), 215–235 (ALLG…GFAL), and 249–269 (ALAV…IVLL).

Belongs to the UPF0761 family.

It is found in the cell inner membrane. In Photobacterium profundum (strain SS9), this protein is UPF0761 membrane protein PBPRA3489.